A 349-amino-acid chain; its full sequence is Putative inosamine-phosphate amidinotransferase 2 (349 aa).

Belongs to the amidinotransferase family.

It catalyses the reaction 1-amino-1-deoxy-scyllo-inositol 4-phosphate + L-arginine = 1-guanidino-1-deoxy-scyllo-inositol 4-phosphate + L-ornithine. Its pathway is antibiotic biosynthesis; streptomycin biosynthesis. Its function is as follows. It is not obvious if strB2 participates in streptomycin biosynthesis as an inosamine-phosphate amidinotransferase. Attempt to measure its activity have failed and the nucleophilic cysteine which is the key residue for amidine transfer is not conserved but replaced by a glycine residue. The protein is Putative inosamine-phosphate amidinotransferase 2 (strB2) of Streptomyces griseus.